The sequence spans 310 residues: ADP-L-glycero-D-manno-heptose-6-epimerase (310 aa).

Residues 10–11 (FI), 31–32 (DN), Lys38, Lys53, 75–79 (EGACS), and Asn92 each bind NADP(+). The Proton acceptor role is filled by Tyr140. Position 144 (Lys144) interacts with NADP(+). Asn169 lines the substrate pocket. Residues Val170 and Lys178 each coordinate NADP(+). The active-site Proton acceptor is Lys178. Residues Ser180, His187, 201-204 (FEGS), Arg209, and Tyr272 contribute to the substrate site.

The protein belongs to the NAD(P)-dependent epimerase/dehydratase family. HldD subfamily. Homopentamer. Requires NADP(+) as cofactor.

The enzyme catalyses ADP-D-glycero-beta-D-manno-heptose = ADP-L-glycero-beta-D-manno-heptose. The protein operates within nucleotide-sugar biosynthesis; ADP-L-glycero-beta-D-manno-heptose biosynthesis; ADP-L-glycero-beta-D-manno-heptose from D-glycero-beta-D-manno-heptose 7-phosphate: step 4/4. Functionally, catalyzes the interconversion between ADP-D-glycero-beta-D-manno-heptose and ADP-L-glycero-beta-D-manno-heptose via an epimerization at carbon 6 of the heptose. In Klebsiella pneumoniae (strain 342), this protein is ADP-L-glycero-D-manno-heptose-6-epimerase.